Consider the following 339-residue polypeptide: Uroporphyrinogen decarboxylase (339 aa).

Residues 23–27 (RQAGR), Asp72, Tyr147, Thr202, and His315 each bind substrate.

Belongs to the uroporphyrinogen decarboxylase family. Homodimer.

It localises to the cytoplasm. The catalysed reaction is uroporphyrinogen III + 4 H(+) = coproporphyrinogen III + 4 CO2. It functions in the pathway porphyrin-containing compound metabolism; protoporphyrin-IX biosynthesis; coproporphyrinogen-III from 5-aminolevulinate: step 4/4. Functionally, catalyzes the decarboxylation of four acetate groups of uroporphyrinogen-III to yield coproporphyrinogen-III. This is Uroporphyrinogen decarboxylase from Geotalea uraniireducens (strain Rf4) (Geobacter uraniireducens).